Consider the following 230-residue polypeptide: uncharacterized protein (230 aa).

Helical transmembrane passes span 4-24 (ACIA…MVKL), 30-50 (LPFL…LMMF), 67-87 (LLGP…HIIV), 91-111 (VPIL…GLIF), 148-168 (MTVV…PLFL), and 210-230 (MTLC…LFHI).

The protein belongs to the YohK (E.coli)/YwbG (IPA-22R) (B.subtilis) family.

Its subcellular location is the cell membrane. This is an uncharacterized protein from Bacillus subtilis (strain 168).